A 94-amino-acid chain; its full sequence is Acylphosphatase (94 aa).

Residues 5 to 94 (RLTAFVHGHV…PRDVEGFVER (90 aa)) form the Acylphosphatase-like domain. Active-site residues include Arg-20 and Asn-38.

The protein belongs to the acylphosphatase family.

The catalysed reaction is an acyl phosphate + H2O = a carboxylate + phosphate + H(+). The polypeptide is Acylphosphatase (acyP) (Corynebacterium glutamicum (strain R)).